Here is a 65-residue protein sequence, read N- to C-terminus: Large ribosomal subunit protein bL35 (65 aa).

The protein belongs to the bacterial ribosomal protein bL35 family.

This chain is Large ribosomal subunit protein bL35, found in Oleidesulfovibrio alaskensis (strain ATCC BAA-1058 / DSM 17464 / G20) (Desulfovibrio alaskensis).